Here is a 242-residue protein sequence, read N- to C-terminus: Protein FsrB (242 aa).

A run of 5 helical transmembrane segments spans residues 29 to 49, 52 to 72, 78 to 95, 100 to 120, and 160 to 180; these read LTVY…SVLF, LSET…AGGW, WLCR…PFVL, VSLP…LFYW, and KIAS…LPVT.

Belongs to the AgrB family.

It is found in the cell membrane. Its function is as follows. May be involved in the proteolytic processing of a quorum sensing system signal molecule precursor required for the regulation of the virulence genes for gelatinase (gelE) and a serine protease (sprE). This is Protein FsrB (fsrB) from Enterococcus faecalis (strain ATCC 47077 / OG1RF).